A 51-amino-acid chain; its full sequence is Large ribosomal subunit protein eL39 (51 aa).

It belongs to the eukaryotic ribosomal protein eL39 family.

In Methanopyrus kandleri (strain AV19 / DSM 6324 / JCM 9639 / NBRC 100938), this protein is Large ribosomal subunit protein eL39.